The primary structure comprises 86 residues: MDIVQQVGLLVVLIIELVIVIVIWVKVYKLCKEDRRQKKIDRLIARIRERAEDSGNESDGDTEELQDLITEGDNLMHIGIRDNRNN.

At 1 to 8 (MDIVQQVG) the chain is on the extracellular side. A helical membrane pass occupies residues 9 to 29 (LLVVLIIELVIVIVIWVKVYK). Over 30–86 (LCKEDRRQKKIDRLIARIRERAEDSGNESDGDTEELQDLITEGDNLMHIGIRDNRNN) the chain is Cytoplasmic. Residues Ser54 and Ser58 each carry the phosphoserine; by host CK2 modification.

This sequence belongs to the HIV-1 VPU protein family. In terms of assembly, homopentamer. Interacts with host CD4 and BRTC; these interactions induce proteasomal degradation of CD4. Interacts with host BST2; this interaction leads to the degradation of host BST2. Interacts with host FBXW11. Interacts with host AP1M1; this interaction plays a role in the mistrafficking and subsequent degradation of host BST2. Interacts with host RANBP2; this interaction allows Vpu to down-regulate host BLM sumoylation. Forms pentamers or hexamers. Interacts with host CD4 and BRTC; these interactions induce proteasomal degradation of CD4. Interacts with host BST2; this interaction leads to the degradation of host BST2. Interacts with host FBXW11. Interacts with host AP1M1; this interaction plays a role in the mistrafficking and subsequent degradation of host BST2. Post-translationally, phosphorylated by host CK2. This phosphorylation is necessary for interaction with human BTRC and degradation of CD4.

It is found in the host membrane. With respect to regulation, ion channel activity is inhibited by hexamethylene amiloride in vitro. Functionally, enhances virion budding by targeting host CD4 and Tetherin/BST2 to proteasome degradation. Degradation of CD4 prevents any unwanted premature interactions between viral Env and its host receptor CD4 in the endoplasmic reticulum. Degradation of antiretroviral protein Tetherin/BST2 is important for virion budding, as BST2 tethers new viral particles to the host cell membrane. Mechanistically, Vpu bridges either CD4 or BST2 to BTRC, a substrate recognition subunit of the Skp1/Cullin/F-box protein E3 ubiquitin ligase, induces their ubiquitination and subsequent proteasomal degradation. The alteration of the E3 ligase specificity by Vpu seems to promote the degradation of host IKBKB, leading to NF-kappa-B down-regulation and subsequent apoptosis. Acts as a viroporin that forms an oligomeric ion channel in membranes. Modulates the host DNA repair mechanisms to promote degradation of nuclear viral cDNA in cells that are already productively infected in order to suppress immune sensing and proviral hyper-integration (superinfection). Manipulates PML-NBs and modulates SUMOylation of host BLM protein thereby enhancing its DNA-end processing activity toward viral unintegrated linear DNA. Also inhibits RAD52-mediated homologous repair of viral cDNA, preventing the generation of dead-end circular forms of single copies of the long terminal repeat and permitting sustained nucleolytic attack. The polypeptide is Protein Vpu (Pan troglodytes (Chimpanzee)).